Consider the following 476-residue polypeptide: H2.0-like homeobox protein (476 aa).

Disordered regions lie at residues 121 to 170, 328 to 401, and 413 to 476; these read HLPQ…SSKD, WRHS…HQTT, and TASS…LAGL. Residues 158–168 show a composition bias toward low complexity; the sequence is HHSGSAPAPSS. The homeobox DNA-binding region spans 273–332; sequence RSWSRAVFSNLQRKGLEKRFEIQKYVTKPDRKQLAAMLGLTDAQVKVWFQNRRMKWRHSK. Basic and acidic residues-rich tracts occupy residues 331–346 and 355–368; these read SKEA…EAGE and EGER…RSEG. Residues 369–379 show a composition bias toward acidic residues; the sequence is EAESESSDSES. The segment covering 386–397 has biased composition (basic and acidic residues); it reads DTERTEGTERSL. Over residues 413–446 the composition is skewed to low complexity; the sequence is TASSSASGSSFSFSSSSSLGSSNGSAGSASSLGS. Residues 455 to 464 show a composition bias toward polar residues; it reads HQPSVTSGPQ.

It belongs to the H2.0 homeobox family.

The protein resides in the nucleus. Functionally, transcription factor required for TBX21/T-bet-dependent maturation of Th1 cells as well as maintenance of Th1-specific gene expression. Involved in embryogenesis and hematopoiesis. In Rattus norvegicus (Rat), this protein is H2.0-like homeobox protein (Hlx).